Reading from the N-terminus, the 213-residue chain is MKALKIALTKGRLERDAVALLKKAGIDCSSMLDKKRKLIFHSNSQPVSFILVKAVDVMTYVKHGVADIGIVGKDVLMEASKSHYEMLDLEIGKCQFCLASTPDFDPSNYRRKIIATKYPTVASKFFREKGEDVEIIKIEGSVEIAPVLGLADAIIDIVETGSTLKENGLLIYEKMYPISARLIVNKASLKQNKTQIFQLIDQLEQAIKEERTK.

Belongs to the ATP phosphoribosyltransferase family. Short subfamily. Heteromultimer composed of HisG and HisZ subunits.

The protein localises to the cytoplasm. It carries out the reaction 1-(5-phospho-beta-D-ribosyl)-ATP + diphosphate = 5-phospho-alpha-D-ribose 1-diphosphate + ATP. It participates in amino-acid biosynthesis; L-histidine biosynthesis; L-histidine from 5-phospho-alpha-D-ribose 1-diphosphate: step 1/9. Functionally, catalyzes the condensation of ATP and 5-phosphoribose 1-diphosphate to form N'-(5'-phosphoribosyl)-ATP (PR-ATP). Has a crucial role in the pathway because the rate of histidine biosynthesis seems to be controlled primarily by regulation of HisG enzymatic activity. In Listeria welshimeri serovar 6b (strain ATCC 35897 / DSM 20650 / CCUG 15529 / CIP 8149 / NCTC 11857 / SLCC 5334 / V8), this protein is ATP phosphoribosyltransferase.